A 397-amino-acid polypeptide reads, in one-letter code: S-adenosylmethionine synthase (397 aa).

Residue H16 coordinates ATP. D18 is a Mg(2+) binding site. K(+) is bound at residue E44. Residues E57 and Q100 each coordinate L-methionine. A flexible loop region spans residues 100–110 (QSPDIAQGVNE). Residues 175–177 (DAK), 242–243 (RF), D251, 257–258 (RK), A274, and K278 each bind ATP. An L-methionine-binding site is contributed by D251. K282 contacts L-methionine.

The protein belongs to the AdoMet synthase family. Homotetramer; dimer of dimers. The cofactor is Mg(2+). K(+) serves as cofactor.

Its subcellular location is the cytoplasm. It carries out the reaction L-methionine + ATP + H2O = S-adenosyl-L-methionine + phosphate + diphosphate. Its pathway is amino-acid biosynthesis; S-adenosyl-L-methionine biosynthesis; S-adenosyl-L-methionine from L-methionine: step 1/1. Functionally, catalyzes the formation of S-adenosylmethionine (AdoMet) from methionine and ATP. The overall synthetic reaction is composed of two sequential steps, AdoMet formation and the subsequent tripolyphosphate hydrolysis which occurs prior to release of AdoMet from the enzyme. The sequence is that of S-adenosylmethionine synthase from Streptococcus thermophilus (strain ATCC BAA-250 / LMG 18311).